The chain runs to 114 residues: Protein ORF3 (114 aa).

2 hydrophobic regions span residues 6-22 (CALGLFCCCSSCFCLCC) and 33-53 (AVVGGAAAVPAVVSGVTGLIL). The tract at residues 28 to 68 (VSRLAAVVGGAAAVPAVVSGVTGLILSPSQSPIFIQPTPLP) is interaction with host HPX. The segment at 72–114 (PLRPGLDLAFANQPGHLAPLGEIRPSAPPLPPVADLPQPGLRR) is homodimerization, and interaction with host AMBP/bikunin. The interval 91 to 114 (LGEIRPSAPPLPPVADLPQPGLRR) is disordered. The interaction with host SRC, HCK, FYN, PIK3R3 and GRB2 stretch occupies residues 95–104 (RPSAPPLPPV). The PTAP/PSAP motif motif lies at 96–99 (PSAP).

This sequence belongs to the hepevirus ORF3 protein family. Forms homooligomers. Interacts with host SRC, HCK, FYN, PIK3R3 and GRB2 (via SH3 domain); binding does not activate the kinases. Interacts with host AMBP/bikunin and AMBP/alpha-1-microglobulin peptides. Interacts with host HPX/hemopexin. Interacts (when phosphorylated) with capsid protein ORF2. Interacts with host TSG101; this interaction plays a role in viral release from the host cell. Interacts with host SIRPA; this interaction down-regulates the phosphorylation of host IRF3. Palmitoylated in the N-terminus.

It localises to the host endoplasmic reticulum membrane. The protein localises to the host cytoplasm. The protein resides in the host cytoskeleton. It is found in the virion. Its subcellular location is the host cell membrane. In terms of biological role, small multifunctional phosphoprotein involved in virion morphogenesis, egress and counteracting host innate immunity. Plays critical roles in the final steps of viral release by interacting with host TSG101, a member of the vacuolar protein-sorting pathway and using other cellular host proteins involved in vesicle formation pathway. Also acts as a viroporin and forms ion conductive pores allowing viral particle release. Impairs the generation of type I interferon by down-regulating host TLR3 and TLR7 as well as their downstream signaling pathways. Down-regulates the phosphorylation of host IRF3 via the interaction with host SIRP-alpha, thereby inhibiting IFN-I expression. Interacts with host microtubules. This is Protein ORF3 from Hepatitis E virus genotype 2 (isolate Human/Mexico) (HEV-2).